Reading from the N-terminus, the 568-residue chain is Phosphoprotein (568 aa).

The segment at 1 to 24 is disordered; the sequence is MDQDAFFFERDPEAEGEAPRKQES. Positions 7 to 24 are enriched in basic and acidic residues; the sequence is FFERDPEAEGEAPRKQES. The tract at residues 33-41 is N0 binding; sequence DVVLSYKPT. The segment at 45–324 is disordered; the sequence is EDRSWLHGII…ANEEETSNTS (280 aa). Basic and acidic residues-rich tracts occupy residues 56-105, 132-144, and 151-167; these read NPKE…HARI, RNTRIDEDSPNER, and LTDEDRKMAEDSNKREE. Polar residues predominate over residues 190-208; the sequence is RTNNNGRSMETSSTHSTRI. The segment covering 239–253 has biased composition (basic and acidic residues); sequence TRSERTQNSELHKST. The span at 294–305 shows a compositional bias: polar residues; it reads YTMNNANNNTKS. A multimerization region spans residues 344-411; it reads FELSRSASHV…SSRDLHKRFS (68 aa). The stretch at 387–416 forms a coiled coil; that stretch reads EENRTLLKQIQEEINSSRDLHKRFSEYQKE. The interval 412 to 445 is l protein binding; sequence EYQKEQNSLMMANLSTLHIITDRGGKTGDPSDTT. The segment at 434-455 is disordered; the sequence is RGGKTGDPSDTTRSPSVFTKGK. The segment covering 441 to 450 has biased composition (polar residues); it reads PSDTTRSPSV. An interaction with the nucleocapsid (N-RNA) region spans residues 479 to 568; it reads DLIREDELRD…FEEDIDSLTN (90 aa).

This sequence belongs to the respirovirus P protein family. Homotetramer. Interacts (via multimerization domain) with polymerase L; this interaction forms the polymerase complex. Interacts (via N-terminus) with N0; this interaction allows P to chaperon N0 before encapsidation and form the N-P complex. Interacts (via C-terminus) with N-RNA template; this interaction positions the polymerase on the template.

Functionally, essential cofactor of the RNA polymerase L that plays a central role in the transcription and replication by forming the polymerase complex with RNA polymerase L and recruiting L to the genomic N-RNA template for RNA synthesis. Also plays a central role in the encapsidation of nascent RNA chains by forming the encapsidation complex with the nucleocapsid protein N (N-P complex). Acts as a chaperone for newly synthesized free N protein, so-called N0, allowing encapsidation of nascent RNA chains during replication. The nucleoprotein protein N prevents excessive phosphorylation of P, which leads to down-regulation of viral transcription/ replication. Participates, together with N, in the formation of viral factories (viroplasms), which are large inclusions in the host cytoplasm where replication takes place. Recruits host PI4KB and remodel the host endoplasmic reticulum membrane to form viral replication factories. The sequence is that of Phosphoprotein (P/C) from Human parainfluenza 1 virus (strain C35) (HPIV-1).